A 335-amino-acid polypeptide reads, in one-letter code: Probable calcium-binding protein CML49 (335 aa).

Over residues 1–10 (MSGYPPSSQG) the composition is skewed to low complexity. Residues 1 to 154 (MSGYPPSSQG…PQASYGSPFA (154 aa)) form a disordered region. The segment covering 30 to 45 (NPPPYGSSGSNPPPPY) has biased composition (pro residues). Over residues 46–63 (GSSASSPYAVPYGAQPAP) the composition is skewed to low complexity. Residues 110–141 (DYGGYGGAPQQSGHGGGYGGAPQQSGHGGGYG) show a composition bias toward gly residues. EF-hand domains lie at 164–199 (GTDP…YNQS) and 230–265 (FSLQ…LGFS). Positions 177, 179, 181, 188, 243, 245, 247, 249, and 254 each coordinate Ca(2+).

Functionally, potential calcium sensor. The sequence is that of Probable calcium-binding protein CML49 (CML49) from Arabidopsis thaliana (Mouse-ear cress).